A 544-amino-acid polypeptide reads, in one-letter code: Serine/threonine-protein kinase PAK 3 (544 aa).

Positions 1–73 (MSDSLDNEEK…EKERPEISLP (73 aa)) are disordered. 2 positions are modified to phosphoserine: Ser2 and Ser4. Residues 18–32 (MNSNNRDSSALNHSS) are compositionally biased toward polar residues. Ser50 is subject to Phosphoserine; by autocatalysis. Basic and acidic residues predominate over residues 63–73 (KEKERPEISLP). Residues 65 to 108 (KERPEISLPSDFEHTIHVGFDAVTGEFTGIPEQWARLLQTSNIT) are GTPase-binding. Residues 65–135 (KERPEISLPS…YDSKETVNNQ (71 aa)) are autoregulatory region. The region spanning 70-83 (ISLPSDFEHTIHVG) is the CRIB domain. The segment at 84–267 (FDAVTGEFTG…IVSVGDPKKK (184 aa)) is linker. Ser139 is subject to Phosphoserine; by autocatalysis. 2 disordered regions span residues 156–197 (SNTK…RPEH) and 213–248 (PAAP…KMTD). Phosphoserine is present on Ser171. The segment covering 171-186 (SEEEDEEEEEEEDDNE) has biased composition (acidic residues). Positions 224–235 (SAENANSSTLYR) are enriched in polar residues. Residues 268–519 (YTRFEKIGQG…AKELLQHPFL (252 aa)) enclose the Protein kinase domain. ATP-binding positions include 274 to 282 (IGQGASGTV) and Lys297. Asp387 acts as the Proton acceptor in catalysis. The residue at position 421 (Thr421) is a Phosphothreonine; by autocatalysis.

It belongs to the protein kinase superfamily. STE Ser/Thr protein kinase family. STE20 subfamily. Interacts tightly with GTP-bound but not GDP-bound CDC42/p21 and RAC1. Shows highly specific binding to the SH3 domains of phospholipase C-gamma and of adapter protein NCK. Interacts with the C-terminal of APP. Interacts with ARHGEF6 and ARHGEF7. Interacts with GIT1 and GIT2. The cofactor is Mg(2+). Autophosphorylated when activated by CDC42/p21. In terms of processing, neddylated. In terms of tissue distribution, detected at high levels in the brain and at low levels in the testis.

It localises to the cytoplasm. The catalysed reaction is L-seryl-[protein] + ATP = O-phospho-L-seryl-[protein] + ADP + H(+). It catalyses the reaction L-threonyl-[protein] + ATP = O-phospho-L-threonyl-[protein] + ADP + H(+). Its activity is regulated as follows. Activated by binding small G proteins. Binding of GTP-bound CDC42 or RAC1 to the autoregulatory region releases monomers from the autoinhibited dimer, enables phosphorylation of Thr-421 and allows the kinase domain to adopt an active structure. Functionally, serine/threonine protein kinase that plays a role in a variety of different signaling pathways including cytoskeleton regulation, cell migration, or cell cycle regulation. Plays a role in dendrite spine morphogenesis as well as synapse formation and plasticity. Acts as a downstream effector of the small GTPases CDC42 and RAC1. Activation by the binding of active CDC42 and RAC1 results in a conformational change and a subsequent autophosphorylation on several serine and/or threonine residues. Phosphorylates MAPK4 and MAPK6 and activates the downstream target MAPKAPK5, a regulator of F-actin polymerization and cell migration. Additionally, phosphorylates TNNI3/troponin I to modulate calcium sensitivity and relaxation kinetics of thin myofilaments. May also be involved in early neuronal development. In hippocampal neurons, necessary for the formation of dendritic spines and excitatory synapses; this function is dependent on kinase activity and may be exerted by the regulation of actomyosin contractility through the phosphorylation of myosin II regulatory light chain (MLC). This is Serine/threonine-protein kinase PAK 3 (Pak3) from Rattus norvegicus (Rat).